A 156-amino-acid chain; its full sequence is Small ribosomal subunit protein uS7 (156 aa).

It belongs to the universal ribosomal protein uS7 family. In terms of assembly, part of the 30S ribosomal subunit. Contacts proteins S9 and S11.

Its function is as follows. One of the primary rRNA binding proteins, it binds directly to 16S rRNA where it nucleates assembly of the head domain of the 30S subunit. Is located at the subunit interface close to the decoding center, probably blocks exit of the E-site tRNA. This Synechococcus elongatus (strain ATCC 33912 / PCC 7942 / FACHB-805) (Anacystis nidulans R2) protein is Small ribosomal subunit protein uS7.